Consider the following 66-residue polypeptide: Large ribosomal subunit protein bL33c (66 aa).

This sequence belongs to the bacterial ribosomal protein bL33 family.

It is found in the plastid. Its subcellular location is the chloroplast. The protein is Large ribosomal subunit protein bL33c of Carica papaya (Papaya).